Consider the following 143-residue polypeptide: Transcriptional regulator MraZ (143 aa).

SpoVT-AbrB domains lie at 5-47 and 76-119; these read EYQH…PQEE and ASEC…SKSE.

It belongs to the MraZ family. Forms oligomers.

It localises to the cytoplasm. It is found in the nucleoid. This chain is Transcriptional regulator MraZ, found in Listeria monocytogenes serotype 4b (strain CLIP80459).